A 178-amino-acid polypeptide reads, in one-letter code: Alkyl hydroperoxide reductase AhpD (178 aa).

The active-site Proton donor is the Cys-131. Cysteines 131 and 134 form a disulfide. The Cysteine sulfenic acid (-SOH) intermediate role is filled by Cys-134.

Belongs to the AhpD family. As to quaternary structure, homotrimer.

It carries out the reaction N(6)-[(R)-dihydrolipoyl]-L-lysyl-[lipoyl-carrier protein] + a hydroperoxide = N(6)-[(R)-lipoyl]-L-lysyl-[lipoyl-carrier protein] + an alcohol + H2O. Functionally, antioxidant protein with alkyl hydroperoxidase activity. Required for the reduction of the AhpC active site cysteine residues and for the regeneration of the AhpC enzyme activity. The protein is Alkyl hydroperoxide reductase AhpD of Streptomyces coelicolor (strain ATCC BAA-471 / A3(2) / M145).